A 180-amino-acid polypeptide reads, in one-letter code: MKSVYFVAGLFIMLAQGSWQRSLQDTEEKPRSVSASQTDMLDDPDQMNEDKRHSQGTFTSDYSKYLDSRRAQQFLKWLLNVKRNRNNIAKRHDEFERHAEGTFTSDVSSYLEGQAAKEFIAWLVKGRGRRDFPEEVAIVEELGRRHADGSFSDEMNTILDNLATRDFINWLIQTKITDRK.

The signal sequence occupies residues 1 to 20 (MKSVYFVAGLFIMLAQGSWQ). The tract at residues 23–58 (LQDTEEKPRSVSASQTDMLDDPDQMNEDKRHSQGTF) is disordered. Position 54 is a phosphoserine (Ser-54). Positions 84–89 (NRNNIA) are excised as a propeptide. Residues Ser-105 and Ser-108 each carry the phosphoserine modification. The residue at position 127 (Arg-127) is an Arginine amide. Positions 131–145 (DFPEEVAIVEELGRR) are excised as a propeptide. A phosphoserine mark is found at Ser-150 and Ser-152.

This sequence belongs to the glucagon family. Proglucagon is post-translationally processed in a tissue-specific manner in pancreatic A cells and intestinal L cells. In pancreatic A cells, the major bioactive hormone is glucagon cleaved by PCSK2/PC2. In the intestinal L cells PCSK1/PC1 liberates GLP-1, GLP-2, glicentin and oxyntomodulin. GLP-1 is further N-terminally truncated by post-translational processing in the intestinal L cells resulting in GLP-1(7-37) GLP-1-(7-36)amide. The C-terminal amidation is neither important for the metabolism of GLP-1 nor for its effects on the endocrine pancreas.

The protein localises to the secreted. Plays a key role in glucose metabolism and homeostasis. Regulates blood glucose by increasing gluconeogenesis and decreasing glycolysis. A counterregulatory hormone of insulin, raises plasma glucose levels in response to insulin-induced hypoglycemia. Plays an important role in initiating and maintaining hyperglycemic conditions in diabetes. In terms of biological role, potent stimulator of glucose-dependent insulin release. Also stimulates insulin release in response to IL6. Plays important roles on gastric motility and the suppression of plasma glucagon levels. May be involved in the suppression of satiety and stimulation of glucose disposal in peripheral tissues, independent of the actions of insulin. Has growth-promoting activities on intestinal epithelium. May also regulate the hypothalamic pituitary axis (HPA) via effects on LH, TSH, CRH, oxytocin, and vasopressin secretion. Increases islet mass through stimulation of islet neogenesis and pancreatic beta cell proliferation. Inhibits beta cell apoptosis. Its function is as follows. Stimulates intestinal growth and up-regulates villus height in the small intestine, concomitant with increased crypt cell proliferation and decreased enterocyte apoptosis. The gastrointestinal tract, from the stomach to the colon is the principal target for GLP-2 action. Plays a key role in nutrient homeostasis, enhancing nutrient assimilation through enhanced gastrointestinal function, as well as increasing nutrient disposal. Stimulates intestinal glucose transport and decreases mucosal permeability. Functionally, significantly reduces food intake. Inhibits gastric emptying in humans. Suppression of gastric emptying may lead to increased gastric distension, which may contribute to satiety by causing a sensation of fullness. May modulate gastric acid secretion and the gastro-pyloro-duodenal activity. May play an important role in intestinal mucosal growth in the early period of life. This Cavia porcellus (Guinea pig) protein is Pro-glucagon (GCG).